The chain runs to 193 residues: Dihydrofolate reductase (193 aa).

Residues 1–193 (MIKLVFRYSP…VTTLTESVYK (193 aa)) enclose the DHFR domain. NADP(+) contacts are provided by residues R7, 22–27 (FGLGDG), 52–55 (GAKT), and 73–77 (DLARD).

It belongs to the dihydrofolate reductase family.

The catalysed reaction is (6S)-5,6,7,8-tetrahydrofolate + NADP(+) = 7,8-dihydrofolate + NADPH + H(+). It participates in cofactor biosynthesis; tetrahydrofolate biosynthesis; 5,6,7,8-tetrahydrofolate from 7,8-dihydrofolate: step 1/1. In terms of biological role, key enzyme in folate metabolism. Catalyzes an essential reaction for de novo glycine and purine synthesis, and for DNA precursor synthesis. This is Dihydrofolate reductase (frd) from Escherichia coli (Bacteriophage T4).